The sequence spans 217 residues: Uracil-DNA glycosylase (217 aa).

D62 (proton acceptor) is an active-site residue.

This sequence belongs to the uracil-DNA glycosylase (UDG) superfamily. UNG family.

The protein localises to the cytoplasm. It catalyses the reaction Hydrolyzes single-stranded DNA or mismatched double-stranded DNA and polynucleotides, releasing free uracil.. In terms of biological role, excises uracil residues from the DNA which can arise as a result of misincorporation of dUMP residues by DNA polymerase or due to deamination of cytosine. This Streptococcus uberis (strain ATCC BAA-854 / 0140J) protein is Uracil-DNA glycosylase.